The following is a 172-amino-acid chain: Large ribosomal subunit protein eL20 (172 aa).

Belongs to the eukaryotic ribosomal protein eL20 family. Component of the large ribosomal subunit. Mature ribosomes consist of a small (40S) and a large (60S) subunit. The 40S subunit contains about 32 different proteins and 1 molecule of RNA (18S). The 60S subunit contains 45 different proteins and 3 molecules of RNA (25S, 5.8S and 5S).

The protein resides in the cytoplasm. Component of the ribosome, a large ribonucleoprotein complex responsible for the synthesis of proteins in the cell. The small ribosomal subunit (SSU) binds messenger RNAs (mRNAs) and translates the encoded message by selecting cognate aminoacyl-transfer RNA (tRNA) molecules. The large subunit (LSU) contains the ribosomal catalytic site termed the peptidyl transferase center (PTC), which catalyzes the formation of peptide bonds, thereby polymerizing the amino acids delivered by tRNAs into a polypeptide chain. The nascent polypeptides leave the ribosome through a tunnel in the LSU and interact with protein factors that function in enzymatic processing, targeting, and the membrane insertion of nascent chains at the exit of the ribosomal tunnel. In Candida albicans (strain SC5314 / ATCC MYA-2876) (Yeast), this protein is Large ribosomal subunit protein eL20.